The chain runs to 1082 residues: Inner tegument protein (1082 aa).

An interaction with large tegument protein region spans residues 604–1082 (DHIDCLFNIS…QQDLIAPLTF (479 aa)).

It belongs to the herpesviridae inner tegument protein family. In terms of assembly, interacts (via C-terminus) with the large tegument protein/LTP (via N-terminus).

The protein resides in the virion tegument. It localises to the host cytoplasm. The protein localises to the host nucleus. It is found in the host Golgi apparatus. Its subcellular location is the host trans-Golgi network. Its function is as follows. Plays an essential role in cytoplasmic secondary envelopment during viral egress. Interacts with the capsid via the large tegument protein/LTP and participates in its transport to the host trans-Golgi network (TGN) where secondary envelopment occurs. Modulates tegumentation and capsid accumulation at the viral assembly complex. This is Inner tegument protein (U30) from Homo sapiens (Human).